A 116-amino-acid chain; its full sequence is Nucleoid-associated protein P9215_00191 (116 aa).

The protein belongs to the YbaB/EbfC family. As to quaternary structure, homodimer.

The protein localises to the cytoplasm. Its subcellular location is the nucleoid. Its function is as follows. Binds to DNA and alters its conformation. May be involved in regulation of gene expression, nucleoid organization and DNA protection. This is Nucleoid-associated protein P9215_00191 from Prochlorococcus marinus (strain MIT 9215).